A 269-amino-acid polypeptide reads, in one-letter code: Eukaryotic translation initiation factor 3 subunit G-1 (269 aa).

One can recognise an RRM domain in the interval 188–266 (AAIRISNLSE…LILSVEWSKP (79 aa)).

Belongs to the eIF-3 subunit G family. In terms of assembly, component of the eukaryotic translation initiation factor 3 (eIF-3) complex. The eIF-3 complex interacts with pix.

It localises to the cytoplasm. RNA-binding component of the eukaryotic translation initiation factor 3 (eIF-3) complex, which is involved in protein synthesis of a specialized repertoire of mRNAs and, together with other initiation factors, stimulates binding of mRNA and methionyl-tRNAi to the 40S ribosome. The eIF-3 complex specifically targets and initiates translation of a subset of mRNAs involved in cell proliferation. This subunit can bind 18S rRNA. The polypeptide is Eukaryotic translation initiation factor 3 subunit G-1 (Drosophila erecta (Fruit fly)).